Here is a 261-residue protein sequence, read N- to C-terminus: RING finger and CHY zinc finger domain-containing protein 1 (261 aa).

The CHY-type zinc finger occupies 13–80; it reads LAQGPRGCEH…AQQTCEDCST (68 aa). Zn(2+) is bound by residues Cys20, His22, Cys33, Cys34, Cys40, Cys43, His44, His50, Cys62, Cys65, Cys75, Cys78, Cys87, Cys90, His101, Cys102, Cys105, Cys108, His118, Cys119, Cys122, Cys125, His134, and Cys136. A CTCHY-type zinc finger spans residues 82–144; the sequence is FGEYYCSICH…KCIENVSRQN (63 aa). The RING-type zinc-finger motif lies at 145–189; the sequence is CPICLEDIHTSRVVAHVLPCGHLLHRTCYEEMLKEGYRCPLCMHS.

As to quaternary structure, monomer and homodimer. Interacts with AR, MDM2, KAT5, PLAG1, PLAGL2, COPE, UBE2D2 and GORAB/NTKLBP1. In terms of processing, subject to ubiquitination and proteasomal degradation. Interaction with PLAGL2 or KAT5 enhances protein stability. As to expression, detected in testis, liver, kidney and heart.

Its subcellular location is the nucleus. It localises to the nucleus speckle. The protein resides in the cytoplasm. The enzyme catalyses S-ubiquitinyl-[E2 ubiquitin-conjugating enzyme]-L-cysteine + [acceptor protein]-L-lysine = [E2 ubiquitin-conjugating enzyme]-L-cysteine + N(6)-ubiquitinyl-[acceptor protein]-L-lysine.. The protein operates within protein modification; protein ubiquitination. Functionally, E3 ubiquitin-protein ligase that mediates ubiquitination of target proteins, including p53/TP53, TP73, HDAC1 and CDKN1B. Mediates ubiquitination and degradation of p53/TP53; preferentially acts on tetrameric p53/TP53. Catalyzes monoubiquitinates the translesion DNA polymerase POLH. Involved in the ribosome-associated quality control (RQC) pathway, which mediates the extraction of incompletely synthesized nascent chains from stalled ribosomes: RCHY1 acts downstream of NEMF and recognizes CAT tails associated with stalled nascent chains, leading to their ubiquitination and degradation. This Mus musculus (Mouse) protein is RING finger and CHY zinc finger domain-containing protein 1 (Rchy1).